The following is a 303-amino-acid chain: Counting factor 50 (303 aa).

Residues 1–24 (MNKMNNIFLIISSIILSIVIFVSG) form the signal peptide. The region spanning 28–240 (IDFSSEISVG…CSTSSGSASG (213 aa)) is the Ch-type lysozyme domain. Asparagine 67 carries N-linked (GlcNAc...) asparagine glycosylation. The active site involves glutamate 125. N-linked (GlcNAc...) asparagine glycosylation is present at asparagine 170. The tract at residues 226 to 303 (GSGSGCSTSS…GSGTGSGSSI (78 aa)) is S-G-S motif repeats. Residues 236–292 (GSASGSASGSASGSASGSNSGSSNSGSSNSGSSNSGSNSGSSNSGSGNSGSSNSGSA) show a composition bias toward low complexity. A disordered region spans residues 236 to 303 (GSASGSASGS…GSGTGSGSSI (68 aa)). Gly residues predominate over residues 293 to 303 (SGSGTGSGSSI).

Belongs to the glycosyl hydrolase 25 family. As to quaternary structure, monomer. Component of the counting factor (CF) complex, which includes cf60, cf50, cf45-1 and ctnA.

The protein localises to the secreted. It carries out the reaction Hydrolysis of (1-&gt;4)-beta-linkages between N-acetylmuramic acid and N-acetyl-D-glucosamine residues in a peptidoglycan and between N-acetyl-D-glucosamine residues in chitodextrins.. Cell-counting factor that limits the maximum size of the multicellular structure during aggregation. Has a very low lysozyme activity. The protein is Counting factor 50 (cf50-1) of Dictyostelium discoideum (Social amoeba).